The sequence spans 83 residues: Gas vesicle protein G (83 aa).

It belongs to the gas vesicle GvpG family. As to quaternary structure, gvpF to GvpM interact with each other in vitro, and may form multi-subunit complex(es).

Its subcellular location is the gas vesicle. In terms of biological role, proteins GvpF to GvpM might be involved in nucleating gas vesicle formation. A minor component of the gas vesicle. Gas vesicles are hollow, gas filled proteinaceous nanostructures found in some microorganisms. They allow positioning of halobacteria at the optimal depth for growth in the poorly aerated, shallow brine pools of their habitat. Functionally, expression of a 9.5 kb mc-vac DNA fragment containing 2 divergently transcribed regions (gvpD-gvpE-gvpF-gvpG-gvpH-gvpI-gvpJ-gvpK-gvpL-gvpM and gvpA-gvpC-gvpN-gvpO) allows H.volcanii to produce gas vesicles. This is Gas vesicle protein G from Haloferax mediterranei (strain ATCC 33500 / DSM 1411 / JCM 8866 / NBRC 14739 / NCIMB 2177 / R-4) (Halobacterium mediterranei).